The primary structure comprises 91 residues: Acylphosphatase (91 aa).

Positions 3 to 91 (CLKAVVKGKV…GNYGDFHIKY (89 aa)) constitute an Acylphosphatase-like domain. Active-site residues include R18 and N36.

This sequence belongs to the acylphosphatase family.

The catalysed reaction is an acyl phosphate + H2O = a carboxylate + phosphate + H(+). This chain is Acylphosphatase (acyP), found in Dehalococcoides mccartyi (strain ATCC BAA-2266 / KCTC 15142 / 195) (Dehalococcoides ethenogenes (strain 195)).